A 1241-amino-acid chain; its full sequence is ATP-dependent helicase/nuclease subunit A (1241 aa).

A UvrD-like helicase ATP-binding domain is found at 12–485 (SQWTDDQWKA…IDLAKNFRSR (474 aa)). Position 33 to 40 (33 to 40 (AAAGSGKT)) interacts with ATP. The UvrD-like helicase C-terminal domain maps to 505–805 (GEIDYDADAE…RIMTIHKSKG (301 aa)).

This sequence belongs to the helicase family. AddA subfamily. As to quaternary structure, heterodimer of AddA and AddB/RexB. Mg(2+) is required as a cofactor.

It carries out the reaction Couples ATP hydrolysis with the unwinding of duplex DNA by translocating in the 3'-5' direction.. The catalysed reaction is ATP + H2O = ADP + phosphate + H(+). The heterodimer acts as both an ATP-dependent DNA helicase and an ATP-dependent, dual-direction single-stranded exonuclease. Recognizes the chi site generating a DNA molecule suitable for the initiation of homologous recombination. The AddA nuclease domain is required for chi fragment generation; this subunit has the helicase and 3' -&gt; 5' nuclease activities. The polypeptide is ATP-dependent helicase/nuclease subunit A (Bacillus thuringiensis subsp. konkukian (strain 97-27)).